The sequence spans 323 residues: MTKTFRNPQLTKNGELKHLLSIEGLSRDMITHILDTASQFVSLSDSDRDVKKVPLLRGKSVFNLFFENSTRTRTTFEIAAKRLSADVLNLNINASSTSKGESLLDTINNLSAMSADMFVVRHASSGAPYLIAEHVAPHVHVINAGDGRHAHPTQGLLDMYTIRHFKKDFTQLRVAIVGDILHSRVARSDIHALTTLGVPEVRAIGPRTLLPSGLEQMGVRVFHNMEEGLKDVDVVIMLRLQNERMSGALLPSAQEYFKAFGLTPERLALAAPDAIVMHPGPMNRGVEIDSAVADGPQSVILNQVTFGIAVRMAVMGIVAGNSD.

The carbamoyl phosphate site is built by Arg-71 and Thr-72. Position 99 (Lys-99) interacts with L-aspartate. Carbamoyl phosphate is bound by residues Arg-121, His-151, and Gln-154. The L-aspartate site is built by Arg-184 and Arg-239. Carbamoyl phosphate-binding residues include Gly-280 and Pro-281.

Belongs to the aspartate/ornithine carbamoyltransferase superfamily. ATCase family. As to quaternary structure, heterododecamer (2C3:3R2) of six catalytic PyrB chains organized as two trimers (C3), and six regulatory PyrI chains organized as three dimers (R2).

The enzyme catalyses carbamoyl phosphate + L-aspartate = N-carbamoyl-L-aspartate + phosphate + H(+). It participates in pyrimidine metabolism; UMP biosynthesis via de novo pathway; (S)-dihydroorotate from bicarbonate: step 2/3. In terms of biological role, catalyzes the condensation of carbamoyl phosphate and aspartate to form carbamoyl aspartate and inorganic phosphate, the committed step in the de novo pyrimidine nucleotide biosynthesis pathway. The polypeptide is Aspartate carbamoyltransferase catalytic subunit (Cupriavidus pinatubonensis (strain JMP 134 / LMG 1197) (Cupriavidus necator (strain JMP 134))).